The chain runs to 339 residues: MVREEVAGSTQTLQWKCVESRVDSKRLYYGRFILSPLRKGQADTVGIALRRALLGEIEGTCITRAKFGSVPHEYSTIAGIEESVQEILLNLKEIVLRSNLYGVRDASICVKGPRYITAQDIILPPSVEIVDTAQPIANLTEPIDFCIDLQIKRDRGYQTELRKNYQDGSYPIDAVXMPVRNVNYSIFSCGNGNEKHEILFLEIWTNGSLTPKEALYEASRNLIDLFLPFLHAEEEGTSFEENKNRFTPPLFTFQKRLTNLKKNKKGIPLNCIFIDQLELTSRTYNCLKRANIHTLLDLLSKTEEDLLRIDSFRMEDRKHIWDTLEKHLPIDLLKNKLSF.

Residues 1–233 form an alpha N-terminal domain (alpha-NTD) region; sequence MVREEVAGST…DLFLPFLHAE (233 aa). An alpha C-terminal domain (alpha-CTD) region spans residues 264-339; the sequence is KKGIPLNCIF…IDLLKNKLSF (76 aa).

This sequence belongs to the RNA polymerase alpha chain family. In plastids the minimal PEP RNA polymerase catalytic core is composed of four subunits: alpha, beta, beta', and beta''. When a (nuclear-encoded) sigma factor is associated with the core the holoenzyme is formed, which can initiate transcription.

The protein resides in the plastid. It localises to the chloroplast. The enzyme catalyses RNA(n) + a ribonucleoside 5'-triphosphate = RNA(n+1) + diphosphate. In terms of biological role, DNA-dependent RNA polymerase catalyzes the transcription of DNA into RNA using the four ribonucleoside triphosphates as substrates. This is DNA-directed RNA polymerase subunit alpha from Australopyrum velutinum (Mountain wheat-grass).